The sequence spans 526 residues: Fatty-acid amide hydrolase 2-B (526 aa).

A helical transmembrane segment spans residues 12–32 (CLLVLVSGLFLALFRLLSPGT). Catalysis depends on charge relay system residues Lys128 and Ser203. The active-site Acyl-ester intermediate is Ser227.

It belongs to the amidase family.

The protein localises to the membrane. The enzyme catalyses N-(5Z,8Z,11Z,14Z-eicosatetraenoyl)-ethanolamine + H2O = ethanolamine + (5Z,8Z,11Z,14Z)-eicosatetraenoate. The catalysed reaction is (9Z)-octadecenamide + H2O = (9Z)-octadecenoate + NH4(+). This chain is Fatty-acid amide hydrolase 2-B (faah2b), found in Danio rerio (Zebrafish).